A 470-amino-acid polypeptide reads, in one-letter code: ATP synthase subunit beta (470 aa).

155–162 (GGAGVGKT) lines the ATP pocket.

This sequence belongs to the ATPase alpha/beta chains family. In terms of assembly, F-type ATPases have 2 components, CF(1) - the catalytic core - and CF(0) - the membrane proton channel. CF(1) has five subunits: alpha(3), beta(3), gamma(1), delta(1), epsilon(1). CF(0) has three main subunits: a(1), b(2) and c(9-12). The alpha and beta chains form an alternating ring which encloses part of the gamma chain. CF(1) is attached to CF(0) by a central stalk formed by the gamma and epsilon chains, while a peripheral stalk is formed by the delta and b chains.

The protein resides in the cell membrane. The catalysed reaction is ATP + H2O + 4 H(+)(in) = ADP + phosphate + 5 H(+)(out). Functionally, produces ATP from ADP in the presence of a proton gradient across the membrane. The catalytic sites are hosted primarily by the beta subunits. The protein is ATP synthase subunit beta of Lacticaseibacillus casei (Lactobacillus casei).